A 340-amino-acid chain; its full sequence is Putative 2-hydroxyacid dehydrogenase C1773.17c (340 aa).

NAD(+) is bound by residues 169–170 (AI), 249–251 (TAR), and Asp-275. The active site involves Arg-251. Glu-280 is a catalytic residue. His-298 functions as the Proton donor in the catalytic mechanism. 298–301 (HCGV) contacts NAD(+).

The protein belongs to the D-isomer specific 2-hydroxyacid dehydrogenase family.

The polypeptide is Putative 2-hydroxyacid dehydrogenase C1773.17c (Schizosaccharomyces pombe (strain 972 / ATCC 24843) (Fission yeast)).